A 157-amino-acid chain; its full sequence is Large ribosomal subunit protein eL29 (157 aa).

Positions 1–26 (MAKSKNHTTHNQSRKWHRNGIKKPRS) are enriched in basic residues. The disordered stretch occupies residues 1–32 (MAKSKNHTTHNQSRKWHRNGIKKPRSQRYESL). The residue at position 5 (Lys5) is an N6-methyllysine. Ser31 carries the post-translational modification Phosphoserine. The residue at position 33 (Lys33) is an N6-acetyllysine. Residues 121 to 157 (PKAKAKAKDQTKAQAAAPASIPAQAPKGAQATTKATE) form a disordered region. A compositionally biased stretch (low complexity) spans 132 to 147 (KAQAAAPASIPAQAPK). Phosphoserine is present on Ser140.

It belongs to the eukaryotic ribosomal protein eL29 family. As to quaternary structure, component of the large ribosomal subunit.

The protein resides in the cytoplasm. In terms of biological role, component of the large ribosomal subunit. The ribosome is a large ribonucleoprotein complex responsible for the synthesis of proteins in the cell. This is Large ribosomal subunit protein eL29 (RPL29) from Macaca fascicularis (Crab-eating macaque).